Consider the following 525-residue polypeptide: MDLKTFGGRRNFVFRNWAGIYSSRPEWYFQPSSVDEVVEIVKAAKLKNKTIVTVGSGHSPSNMCVTDEWMMNLDKMNKLLDFVENEDKTYADVTIQGGTRLYKIHKILREKGYAMQSLGSISEQSIGGIISTGTHGSSPFHGLVSSTIVNLTVVNGKGEVLFLDEKSNPEVFRAATLSLGKIGIIVGATVRVVPAFNIKSTQEVIKFETLLEKWDSLWTSSEFIRIWWYPYTRKCILWRGVKTNEPQTKSRYSWWGSTLGRFFYQTLLFISTKIYPPLTPYVERFVFRRQYGEVETLGKGDVAIEDSVTGFNMDCLFSQFVDEWGCPMDNGLEVLRSLDHSIAQAAANKDFYVHVPVEVRCANTTLPKEQPETSFRSNTSRGPVYGNLLRPYLDNTPSQCSYAPIHSVTNSQLTLYINATIYRPFHTNAPIHKWFTLFEDTMSAAGGKPHWAKNFLGSTSFAQGQVKAEGQYQDYEMRGMATRVKEWYGSDLETFKKVRREQDPDNIFLANKQWALINGIIDENE.

The FAD-binding PCMH-type domain maps to 20–195 (IYSSRPEWYF…VGATVRVVPA (176 aa)). Position 58 is a pros-8alpha-FAD histidine (His58).

This sequence belongs to the oxygen-dependent FAD-linked oxidoreductase family. Requires FAD as cofactor.

It is found in the mitochondrion membrane. The catalysed reaction is D-arabinono-1,4-lactone + O2 = dehydro-D-arabinono-1,4-lactone + H2O2 + H(+). The protein operates within cofactor biosynthesis; D-erythroascorbate biosynthesis; dehydro-D-arabinono-1,4-lactone from D-arabinose: step 2/2. This is D-arabinono-1,4-lactone oxidase (ALO1) from Candida glabrata (strain ATCC 2001 / BCRC 20586 / JCM 3761 / NBRC 0622 / NRRL Y-65 / CBS 138) (Yeast).